The primary structure comprises 350 residues: Cell division protein ZipA (350 aa).

Residues 1–6 lie on the Periplasmic side of the membrane; sequence MEDLQL. A helical transmembrane segment spans residues 7–27; it reads VLFVLGAIAIVAVLVHGFWSI. At 28–350 the chain is on the cytoplasmic side; that stretch reads RKQQPRTIKE…QYLARIRANA (323 aa). Disordered stretches follow at residues 36 to 55, 65 to 136, and 187 to 213; these read KEQP…AEGF, VRKL…PSAR, and RVPA…EEPL. Composition is skewed to basic and acidic residues over residues 65–109 and 116–131; these read VRKL…ESRA and AAHE…HEEP.

It belongs to the ZipA family. Interacts with FtsZ via their C-terminal domains.

It localises to the cell inner membrane. In terms of biological role, essential cell division protein that stabilizes the FtsZ protofilaments by cross-linking them and that serves as a cytoplasmic membrane anchor for the Z ring. Also required for the recruitment to the septal ring of downstream cell division proteins. This Shewanella amazonensis (strain ATCC BAA-1098 / SB2B) protein is Cell division protein ZipA.